A 447-amino-acid polypeptide reads, in one-letter code: Putative branched-chain amino acid carrier protein SSP1343 (447 aa).

Transmembrane regions (helical) follow at residues 6 to 26, 40 to 60, 74 to 94, 116 to 136, 143 to 163, 192 to 212, 228 to 248, 289 to 309, 324 to 344, 349 to 369, 381 to 401, and 416 to 436; these read WIIGFTLFAMFFGAGNLIFPP, ILAFALTGIGLPLLGVIVGAL, PKFSIIFLIIIYLTIGPLFAI, LALFIFTVIYFLIVLYLCINP, IGSLLTPLLLITILAMIVKGF, GYLTMDAIAAIAFSMIVVNAV, LMAGIIAAVALMFIYISLGYI, LLGIIVALACLTTACGLVVAV, IYVIIFTLISFILANQGLNSV, VPVLSIVYPIAITSVLLILLA, IPVAIVSIVSILSMIHTQGWI, and LEWFPIAIVTTIIGYIVAAMV.

It belongs to the branched chain amino acid transporter family.

It is found in the cell membrane. In terms of biological role, component of the transport system for branched-chain amino acids (leucine, isoleucine and valine), which is coupled to a proton motive force. In Staphylococcus saprophyticus subsp. saprophyticus (strain ATCC 15305 / DSM 20229 / NCIMB 8711 / NCTC 7292 / S-41), this protein is Putative branched-chain amino acid carrier protein SSP1343.